We begin with the raw amino-acid sequence, 270 residues long: Cell division protein DivIB (270 aa).

Topologically, residues Met-1–His-28 are cytoplasmic. Residues Leu-29–Pro-49 traverse the membrane as a helical segment. Topologically, residues Leu-50–Glu-270 are extracellular. One can recognise a POTRA domain in the interval Ser-51 to Phe-119.

The protein belongs to the FtsQ/DivIB family. DivIB subfamily.

It is found in the cell membrane. Its function is as follows. Cell division protein that may be involved in stabilizing or promoting the assembly of the division complex. In Listeria monocytogenes serovar 1/2a (strain ATCC BAA-679 / EGD-e), this protein is Cell division protein DivIB.